Here is a 253-residue protein sequence, read N- to C-terminus: FAS1 domain-containing protein CAGL0M08734g (253 aa).

A signal peptide spans 1 to 16 (MVALKYVLVPVALVAA). Positions 84 to 248 (DIYLDSQISV…GVILVIDATL (165 aa)) constitute an FAS1 domain.

The protein localises to the vacuole. The protein is FAS1 domain-containing protein CAGL0M08734g of Candida glabrata (strain ATCC 2001 / BCRC 20586 / JCM 3761 / NBRC 0622 / NRRL Y-65 / CBS 138) (Yeast).